Reading from the N-terminus, the 293-residue chain is 2-pyrone-4,6-dicarboxylate hydrolase (293 aa).

The disordered stretch occupies residues 1 to 20 (MTNDERILSWNETPSKPRYT). Substrate-binding positions include 29–31 (HCH), Y47, S75, R122, R128, Y154, and H178. D246 (proton acceptor) is an active-site residue. N251 is a binding site for substrate.

This sequence belongs to the metallo-dependent hydrolases superfamily. PDC hydrolase family. As to quaternary structure, monomer.

It catalyses the reaction 2-oxo-2H-pyran-4,6-dicarboxylate + H2O = (1E)-4-oxobut-1-ene-1,2,4-tricarboxylate + H(+). Its pathway is secondary metabolite metabolism; lignin degradation. Its activity is regulated as follows. Strongly inhibited by 1 mM Zn(2+) ions. Also inhibited by pyridine-2,4-dicarboxylic acid, 5-hydroxyisophthalic acid and 5,5'-dithiobis(2-nitrobenzoic acid) (Ellman reagent). Functionally, contributes to the degradation of lignin at the level of the protocatechuate 4,5-cleavage pathway. Catalyzes the hydrolysis of 2-pyrone-4,6-dicarboxylate (PDC) to (4E)-oxalomesaconate (OMA). The keto form of OMA can tautomerize into the enol form, 4-carboxy-2-hydroxymuconate (CHM), under certain pH conditions. Also catalyzes the reverse reaction. Is essential for the growth of Sphingobium sp. SYK-6 on vanillate but is not responsible for the growth of this strain on syringate. This chain is 2-pyrone-4,6-dicarboxylate hydrolase, found in Sphingobium sp. (strain NBRC 103272 / SYK-6).